The chain runs to 214 residues: Soluble inorganic pyrophosphatase (214 aa).

A disordered region spans residues 1–20 (MSEEDKTAASAEQPKRAPKL). 3 residues coordinate substrate: Lys64, Arg78, and Tyr90. Residues Asp100, Asp105, and Asp137 each coordinate Mg(2+). A substrate-binding site is contributed by Tyr174.

The protein belongs to the PPase family. Mg(2+) is required as a cofactor.

It is found in the cytoplasm. It carries out the reaction diphosphate + H2O = 2 phosphate + H(+). The polypeptide is Soluble inorganic pyrophosphatase (IPP) (Zea mays (Maize)).